A 541-amino-acid chain; its full sequence is Zinc finger protein 513 (541 aa).

Residues 1–120 (MPRRKQSHPQ…ARGERPGPAC (120 aa)) are disordered. A compositionally biased stretch (acidic residues) spans 44-55 (LEFEEEEEEEEG). S85 and S96 each carry phosphoserine. Basic and acidic residues predominate over residues 103 to 115 (EPARGPGEARGER). C2H2-type zinc fingers lie at residues 150 to 172 (YSCR…MQTH), 178 to 200 (FRCG…TRTH), 206 to 228 (YRCP…QRTH), 360 to 382 (FACS…MKTH), 388 to 410 (FRCA…QRVH), 416 to 438 (YKCP…GRIH), 444 to 466 (FRCS…MLRH), and 472 to 494 (FRCA…QKVH). The segment at 492 to 541 (KVHGHGGAGGPGLSAPEGWAPPHSPPSVLSTRGSAALGATGSRALHTDSP) is disordered.

The protein belongs to the krueppel C2H2-type zinc-finger protein family. In terms of assembly, binds DNA. Can associate with the proximal promoter regions of PAX6 and SP4, and their known targets including ARR3, RHO, OPN1MW2 and OPN1SW.

It localises to the nucleus. Functionally, transcriptional regulator that plays a role in retinal development and maintenance. The protein is Zinc finger protein 513 (Znf513) of Rattus norvegicus (Rat).